We begin with the raw amino-acid sequence, 351 residues long: Foldase protein PrsA 1 (351 aa).

The first 22 residues, 1–22, serve as a signal peptide directing secretion; the sequence is MKNSNKLIASVVTLASVMALAA. A lipid anchor (N-palmitoyl cysteine) is attached at Cys23. Cys23 carries S-diacylglycerol cysteine lipidation. One can recognise a PpiC domain in the interval 145–240; sequence TPTMAVEMIT…KKFYIVKVTK (96 aa). Composition is skewed to low complexity over residues 303–317 and 326–351; these read KTKAASESSTTSESS and ESEQTQTSSAEEPTETEAQTQEPAAQ. The interval 303-351 is disordered; the sequence is KTKAASESSTTSESSKAAEENPSESEQTQTSSAEEPTETEAQTQEPAAQ.

It belongs to the PrsA family.

The protein resides in the cell membrane. It catalyses the reaction [protein]-peptidylproline (omega=180) = [protein]-peptidylproline (omega=0). Functionally, plays a major role in protein secretion by helping the post-translocational extracellular folding of several secreted proteins. The polypeptide is Foldase protein PrsA 1 (prsA1) (Streptococcus pyogenes serotype M18 (strain MGAS8232)).